Consider the following 266-residue polypeptide: Putative carbamate hydrolase RutD (266 aa).

It belongs to the AB hydrolase superfamily. Hydrolase RutD family.

It carries out the reaction carbamate + 2 H(+) = NH4(+) + CO2. Involved in pyrimidine catabolism. May facilitate the hydrolysis of carbamate, a reaction that can also occur spontaneously. The protein is Putative carbamate hydrolase RutD of Escherichia coli O26:H11 (strain 11368 / EHEC).